A 449-amino-acid chain; its full sequence is Exodeoxyribonuclease 7 large subunit (449 aa).

This sequence belongs to the XseA family. As to quaternary structure, heterooligomer composed of large and small subunits.

It localises to the cytoplasm. It carries out the reaction Exonucleolytic cleavage in either 5'- to 3'- or 3'- to 5'-direction to yield nucleoside 5'-phosphates.. In terms of biological role, bidirectionally degrades single-stranded DNA into large acid-insoluble oligonucleotides, which are then degraded further into small acid-soluble oligonucleotides. This chain is Exodeoxyribonuclease 7 large subunit, found in Latilactobacillus sakei subsp. sakei (strain 23K) (Lactobacillus sakei subsp. sakei).